A 229-amino-acid chain; its full sequence is Sugar fermentation stimulation protein homolog (229 aa).

This sequence belongs to the SfsA family.

This is Sugar fermentation stimulation protein homolog from Clostridium novyi (strain NT).